Consider the following 230-residue polypeptide: MKAFDLHRMAFDKVPFDFLGEVALRSLYTFVLVFLFLKMTGRRGVRQMSLFEVLIILTLGSAAGDVAFYDDVPMVPVLIVFITLALLYRLVMWLMAHSEKLEDLLEGKPVVIIEDGELAWSKLNNSNMTEFEFFMELRLRGVEQLGQVRLAILETNGQISVYFFEDDKVKPGLLILPSDCTQRYKVVPESADYACIRCSEIIHMKAGEKQLCPRCANPEWTKASRAKRVT.

3 helical membrane-spanning segments follow: residues 16–36, 48–68, and 75–95; these read FDFL…VFLF, MSLF…DVAF, and VPVL…MWLM.

It belongs to the UPF0702 family.

It localises to the cell membrane. In Escherichia coli (strain K12), this protein is UPF0702 transmembrane protein YcaP (ycaP).